A 216-amino-acid chain; its full sequence is Orotate phosphoribosyltransferase (216 aa).

5-phospho-alpha-D-ribose 1-diphosphate-binding positions include Arg-100, Lys-104, His-106, and 126-134; that span reads EDLISTGGS. Ser-130 is an orotate binding site.

This sequence belongs to the purine/pyrimidine phosphoribosyltransferase family. PyrE subfamily. In terms of assembly, homodimer. Interacts with BrxC. The cofactor is Mg(2+).

The enzyme catalyses orotidine 5'-phosphate + diphosphate = orotate + 5-phospho-alpha-D-ribose 1-diphosphate. Its pathway is pyrimidine metabolism; UMP biosynthesis via de novo pathway; UMP from orotate: step 1/2. Catalyzes the transfer of a ribosyl phosphate group from 5-phosphoribose 1-diphosphate to orotate, leading to the formation of orotidine monophosphate (OMP). The polypeptide is Orotate phosphoribosyltransferase (Bacillus subtilis (strain 168)).